The chain runs to 207 residues: Probable GTP-binding protein EngB (207 aa).

In terms of domain architecture, EngB-type G spans 24 to 199 (GGYEVAFAGR…RGIVGGWLGL (176 aa)). GTP-binding positions include 32–39 (GRSNAGKS), 59–63 (GRTQQ), 77–80 (DLPG), 144–147 (TKAD), and 178–180 (YSG). Residues Ser39 and Thr61 each coordinate Mg(2+).

This sequence belongs to the TRAFAC class TrmE-Era-EngA-EngB-Septin-like GTPase superfamily. EngB GTPase family. Mg(2+) serves as cofactor.

Necessary for normal cell division and for the maintenance of normal septation. This Xanthomonas campestris pv. campestris (strain 8004) protein is Probable GTP-binding protein EngB.